The primary structure comprises 62 residues: Small ribosomal subunit protein eS27 (62 aa).

Zn(2+)-binding residues include Cys-17, Cys-20, Cys-36, and Cys-39. The segment at 17–39 adopts a C4-type zinc-finger fold; the sequence is CNDCENEQIIFGSASRKITCVVC.

Belongs to the eukaryotic ribosomal protein eS27 family. In terms of assembly, part of the 30S ribosomal subunit. Zn(2+) is required as a cofactor.

The polypeptide is Small ribosomal subunit protein eS27 (Methanosarcina barkeri (strain Fusaro / DSM 804)).